The sequence spans 208 residues: 2-phospho-L-lactate guanylyltransferase (208 aa).

The protein belongs to the CofC family. Homodimer.

It catalyses the reaction (2S)-2-phospholactate + GTP + H(+) = (2S)-lactyl-2-diphospho-5'-guanosine + diphosphate. It participates in cofactor biosynthesis; coenzyme F420 biosynthesis. Its function is as follows. Guanylyltransferase that catalyzes the activation of (2S)-2-phospholactate (2-PL) as (2S)-lactyl-2-diphospho-5'-guanosine, via the condensation of 2-PL with GTP. It is involved in the biosynthesis of coenzyme F420, a hydride carrier cofactor. This Methanosarcina mazei (strain ATCC BAA-159 / DSM 3647 / Goe1 / Go1 / JCM 11833 / OCM 88) (Methanosarcina frisia) protein is 2-phospho-L-lactate guanylyltransferase.